A 410-amino-acid polypeptide reads, in one-letter code: UDP-N-acetylglucosamine--dolichyl-phosphate N-acetylglucosaminephosphotransferase (410 aa).

Topologically, residues 1–10 are lumenal; the sequence is MWAFPELPLP. Residues 11–40 form a helical membrane-spanning segment; the sequence is LPLLVNLIGSLLGFVATVTLIPAFRSHFIA. Over 41–60 the chain is Cytoplasmic; the sequence is ARLCGQDLNKLSQQQIPESQ. Residues 46-48 and Glu-58 each bind UDP-N-acetyl-alpha-D-glucosamine; that span reads QDL. A helical membrane pass occupies residues 61–80; it reads GVISGAVFLIILFCFIPFPF. Residues 81 to 93 are Lumenal-facing; sequence LNCFVEEQCKAFP. A helical transmembrane segment spans residues 94-120; sequence HHEFVALIGALLAICCMIFLGFADDVL. At 121-123 the chain is on the cytoplasmic side; the sequence is NLR. The helical transmembrane segment at 124-145 threads the bilayer; it reads WRHKLLLPTAASLPLLMVYFTN. A dolichyl phosphate-binding site is contributed by Lys-127. Over 146–168 the chain is Lumenal; the sequence is FGNTTIVVPKPFRWILGLHLDLG. Residue Asn-148 is glycosylated (N-linked (GlcNAc...) asparagine). Residues 169–188 form a helical membrane-spanning segment; the sequence is ILYYVYMGLLAVFCTNAINI. A dolichyl phosphate-binding site is contributed by 180–188; the sequence is VFCTNAINI. Asn-187 contacts Mg(2+). Over 189–194 the chain is Cytoplasmic; it reads LAGING. A UDP-N-acetyl-alpha-D-glucosamine-binding site is contributed by Asn-193. A helical transmembrane segment spans residues 195 to 215; that stretch reads LEAGQSLVISASIIVFNLVEL. Residues 216-220 lie on the Lumenal side of the membrane; sequence EGDYR. A helical transmembrane segment spans residues 221–244; the sequence is DDHIFSLYFMIPFFFTTLGLLYHN. Topologically, residues 245-252 are cytoplasmic; the sequence is WYPSRVFV. A helical transmembrane segment spans residues 253-271; sequence GDTFCYFAGMTFAVVGILG. Asp-254 lines the Mg(2+) pocket. Residues 272–273 lie on the Lumenal side of the membrane; that stretch reads HF. The chain crosses the membrane as a helical span at residues 274–295; the sequence is SKTMLLFFMPQVFNFLYSLPQL. At 296 to 377 the chain is on the cytoplasmic side; it reads FHIIPCPRHR…LLLKVFGPIH (82 aa). 303 to 305 provides a ligand contact to UDP-N-acetyl-alpha-D-glucosamine; the sequence is RHR. A helical transmembrane segment spans residues 378–402; that stretch reads ERNLTLLLLLLQVLSSAATFSIRYQ. The Lumenal portion of the chain corresponds to 403 to 410; that stretch reads LVRLFYDV.

This sequence belongs to the glycosyltransferase 4 family. In terms of assembly, homodimer. Mg(2+) serves as cofactor.

The protein resides in the endoplasmic reticulum membrane. It catalyses the reaction a di-trans,poly-cis-dolichyl phosphate + UDP-N-acetyl-alpha-D-glucosamine = an N-acetyl-alpha-D-glucosaminyl-diphospho-di-trans,poly-cis-dolichol + UMP. Its pathway is protein modification; protein glycosylation. Inhibited by natural nucleoside antibiotic tunicamycin, which acts as a structural analog and competitor of UDP-GlcNAc. UDP-N-acetylglucosamine--dolichyl-phosphate N-acetylglucosaminephosphotransferase that operates in the biosynthetic pathway of dolichol-linked oligosaccharides, the glycan precursors employed in protein asparagine (N)-glycosylation. The assembly of dolichol-linked oligosaccharides begins on the cytosolic side of the endoplasmic reticulum membrane and finishes in its lumen. The sequential addition of sugars to dolichol pyrophosphate produces dolichol-linked oligosaccharides containing fourteen sugars, including two GlcNAcs, nine mannoses and three glucoses. Once assembled, the oligosaccharide is transferred from the lipid to nascent proteins by oligosaccharyltransferases. Catalyzes the initial step of dolichol-linked oligosaccharide biosynthesis, transfering GlcNAc-1-P from cytosolic UDP-GlcNAc onto the carrier lipid dolichyl phosphate (P-dolichol), yielding GlcNAc-P-P-dolichol embedded in the cytoplasmic leaflet of the endoplasmic reticulum membrane. The chain is UDP-N-acetylglucosamine--dolichyl-phosphate N-acetylglucosaminephosphotransferase from Mus musculus (Mouse).